The sequence spans 98 residues: NADH-ubiquinone oxidoreductase chain 4L (98 aa).

Helical transmembrane passes span 2-22 (TLTT…TLIF), 29-49 (TLLC…ITAL), and 61-81 (ITTL…LTMV).

Belongs to the complex I subunit 4L family. As to quaternary structure, core subunit of respiratory chain NADH dehydrogenase (Complex I) which is composed of 45 different subunits.

The protein resides in the mitochondrion inner membrane. It carries out the reaction a ubiquinone + NADH + 5 H(+)(in) = a ubiquinol + NAD(+) + 4 H(+)(out). Its function is as follows. Core subunit of the mitochondrial membrane respiratory chain NADH dehydrogenase (Complex I) which catalyzes electron transfer from NADH through the respiratory chain, using ubiquinone as an electron acceptor. Part of the enzyme membrane arm which is embedded in the lipid bilayer and involved in proton translocation. The sequence is that of NADH-ubiquinone oxidoreductase chain 4L (MT-ND4L) from Oxymycterus rufus (Red hocicudo).